The following is a 333-amino-acid chain: Protein FanF (333 aa).

The first 22 residues, Met-1 to Ala-22, serve as a signal peptide directing secretion.

Post-translationally, three disulfide bonds are present.

It is found in the fimbrium. Minor component of K99 fimbriae. Is not required for binding of K99 fimbriae to the ganglioside receptor. May play a role in initiation, elongation and flexibility of the fimbriae. This Escherichia coli protein is Protein FanF (fanF).